Consider the following 358-residue polypeptide: Reverse gyrase subunit A (358 aa).

Residues 1 to 351 form the Topo IA-type catalytic domain; the sequence is MNATLRIRNR…KLYLELERVV (351 aa). The O-(5'-phospho-DNA)-tyrosine intermediate role is filled by Tyr-78.

Belongs to the type IA topoisomerase family. Heterodimer of an RgyrA and RgyrB subunit. The topoisomerase domain is shared between the two subunits. Requires Mg(2+) as cofactor.

The protein localises to the cytoplasm. Its function is as follows. Modifies the topological state of DNA by introducing positive supercoils in an ATP-dependent process; dATP also allows positive supercoiling. Increases the linking number in steps of +1. Only this subunit binds DNA, in isolation it does not hydrolyze ATP. Hydrolyzes ATP only in the presence of DNA. Transiently cleaves a single DNA strand and remains covalently bound to the 5' DNA end probably through a tyrosine residue. It changes linking number in steps of one, and nicks DNA preferentially at 5'-CNNN | 3'-sites with a strong preference for 4 pyrimidine residues. There are about 1000 heterodimers per cell. May be involved in rewinding the DNA strands in the regions of the chromosome that have opened up to allow transcription or replication. Functionally, reverse gyrase activity is reconstituted after incubation at 80 degrees Celsius for 5 minutes, positive supercoiling requires ATP and Mg(2+). In the presence of ATP it binds and nicks substrate but does not make closed product. This chain is Reverse gyrase subunit A, found in Methanopyrus kandleri (strain AV19 / DSM 6324 / JCM 9639 / NBRC 100938).